Here is a 356-residue protein sequence, read N- to C-terminus: Probable scoulerine-9-O-methyltransferase OMT2B (356 aa).

Residue M173 coordinates S-adenosyl-L-methionine. D176 lines the substrate pocket. Residues T177, G202, D225, 245–246 (DI), and K259 each bind S-adenosyl-L-methionine. 260–264 (YVLHN) is a substrate binding site. H263 acts as the Proton acceptor in catalysis.

This sequence belongs to the class I-like SAM-binding methyltransferase superfamily. Cation-independent O-methyltransferase family. COMT subfamily.

It carries out the reaction (S)-scoulerine + S-adenosyl-L-methionine = (S)-tetrahydrocolumbamine + S-adenosyl-L-homocysteine + H(+). It functions in the pathway alkaloid biosynthesis. Methyltransferase involved in the biosynthesis of the benzylisoquinoline alkaloid noscapine. Catalyzes the conversion of (S)-scoulerine to (S)-tetrahydrocolumbamine. The heterodimers OMT2B-SOMT3 and OMT2B-6OMT do not possess 3-O-acetyl-4'-O-demethylpapaveroxine 4'-O-methyltransferase activity. The chain is Probable scoulerine-9-O-methyltransferase OMT2B from Papaver somniferum (Opium poppy).